Here is an 86-residue protein sequence, read N- to C-terminus: Omega-theraphotoxin-Hhn1c (86 aa).

The first 21 residues, 1–21, serve as a signal peptide directing secretion; it reads MKSIVFVALFGLALLAVVCSA. Positions 22–50 are excised as a propeptide; that stretch reads SEDAHKELLKEVVRAMVVDKTDAVQAEER. Intrachain disulfides connect cysteine 52–cysteine 66, cysteine 59–cysteine 71, and cysteine 65–cysteine 78.

The protein belongs to the neurotoxin 10 (Hwtx-1) family. 17 (Hntx-9) subfamily. Expressed by the venom gland.

It localises to the secreted. Its function is as follows. Ion channel inhibitor. This is Omega-theraphotoxin-Hhn1c from Cyriopagopus hainanus (Chinese bird spider).